The sequence spans 42 residues: Photosystem I reaction center subunit IX (42 aa).

A helical transmembrane segment spans residues 7–27 (YLSVAPVLATLWFGSLAGLLI).

The protein belongs to the PsaJ family.

The protein resides in the plastid. The protein localises to the chloroplast thylakoid membrane. May help in the organization of the PsaE and PsaF subunits. The polypeptide is Photosystem I reaction center subunit IX (Chloranthus spicatus (Chulantree)).